Reading from the N-terminus, the 764-residue chain is Polyadenylate-binding protein, cytoplasmic and nuclear (764 aa).

A disordered region spans residues 36–56 (VPEAQAEGAEAAPTPTAAPHP). RRM domains are found at residues 60-138 (ASLY…WSQR), 148-225 (GNIF…HHIP), 241-318 (TNVY…RAQK), and 344-462 (VNLY…LAQR). Disordered regions lie at residues 375 to 420 (VMRD…GDRK) and 587 to 634 (GRGG…PRGN). Composition is skewed to basic and acidic residues over residues 387-399 (KDEK…KEGE) and 408-420 (GSEK…GDRK). Gly residues predominate over residues 587–596 (GRGGPAGRGP). The span at 597–613 (QGIPAGIPQGLQGGPAV) shows a compositional bias: low complexity. The region spanning 657–734 (GSFLQAQLAT…ALAVYDEYLK (78 aa)) is the PABC domain. The segment covering 735-745 (TQGQQPTQQPA) has biased composition (polar residues). The disordered stretch occupies residues 735–764 (TQGQQPTQQPAEANGEQPKAEEQKPEEQKA). A compositionally biased stretch (basic and acidic residues) spans 752 to 764 (PKAEEQKPEEQKA).

Belongs to the polyadenylate-binding protein type-1 family.

The protein localises to the cytoplasm. It is found in the nucleus. Its function is as follows. Binds the poly(A) tail of mRNA. Appears to be an important mediator of the multiple roles of the poly(A) tail in mRNA biogenesis, stability and translation. In the nucleus, involved in both mRNA cleavage and polyadenylation. Is also required for efficient mRNA export to the cytoplasm. Acts in concert with a poly(A)-specific nuclease (PAN) to affect poly(A) tail shortening, which may occur concomitantly with either nucleocytoplasmic mRNA transport or translational initiation. In the cytoplasm, stimulates translation initiation and regulates mRNA decay through translation termination-coupled poly(A) shortening, probably mediated by PAN. The polypeptide is Polyadenylate-binding protein, cytoplasmic and nuclear (pabp-1) (Neurospora crassa (strain ATCC 24698 / 74-OR23-1A / CBS 708.71 / DSM 1257 / FGSC 987)).